A 622-amino-acid polypeptide reads, in one-letter code: E3 ubiquitin-protein ligase hrd-1 (622 aa).

Residues M1–A23 form the signal peptide. Residues F24 to N41 are Lumenal-facing. A helical membrane pass occupies residues A42–L62. At K63 to D99 the chain is on the cytoplasmic side. A helical membrane pass occupies residues F100–L120. Over A121–R141 the chain is Lumenal. A helical transmembrane segment spans residues M142–F162. Residues S163–S170 are Cytoplasmic-facing. Residues S171–I191 form a helical membrane-spanning segment. Residues K192–Y215 lie on the Lumenal side of the membrane. The chain crosses the membrane as a helical span at residues A216 to L236. The Cytoplasmic portion of the chain corresponds to R237 to E622. Residues C292–R333 form an RING-type; atypical zinc finger. Pro residues predominate over residues M436–N445. 2 disordered regions span residues M436–D463 and P514–E622. Low complexity predominate over residues A526–E538. Polar residues predominate over residues F562 to P577. Residues P579–T596 show a composition bias toward low complexity.

It belongs to the HRD1 family. As to quaternary structure, homodimer.

The protein resides in the endoplasmic reticulum membrane. It carries out the reaction S-ubiquitinyl-[E2 ubiquitin-conjugating enzyme]-L-cysteine + [acceptor protein]-L-lysine = [E2 ubiquitin-conjugating enzyme]-L-cysteine + N(6)-ubiquitinyl-[acceptor protein]-L-lysine.. The protein operates within protein modification; protein ubiquitination. In terms of biological role, acts as an E3 ubiquitin-protein ligase which accepts ubiquitin specifically from endoplasmic reticulum-associated ubc-7 E2 ligase and transfers it to substrates, promoting their degradation. Component of the endoplasmic reticulum quality control (ERQC) system, which is also called the ER-associated degradation (ERAD) system, involved in ubiquitin-dependent degradation of misfolded endoplasmic reticulum proteins. Also promotes the degradation of normal but naturally short-lived proteins. Protects cells from ER stress-induced apoptosis. Thought to play a role together with hsp-3 in developmental growth and function of intestinal cells and to play a role together with hsp-4 in gonad formation. The sequence is that of E3 ubiquitin-protein ligase hrd-1 from Caenorhabditis briggsae.